Here is a 484-residue protein sequence, read N- to C-terminus: D-aminoacylase (484 aa).

Belongs to the metallo-dependent hydrolases superfamily. N-acyl-D-amino-acid deacylase family. It depends on Zn(2+) as a cofactor.

It localises to the cytoplasm. The enzyme catalyses an N-acyl-D-amino acid + H2O = a D-alpha-amino acid + a carboxylate. In terms of biological role, has a wide specificity; hydrolyzes N-acyl derivative of neutral D-amino acids. The polypeptide is D-aminoacylase (dan) (Alcaligenes xylosoxydans xylosoxydans (Achromobacter xylosoxidans)).